The primary structure comprises 529 residues: Peptide chain release factor 3 (529 aa).

Positions 11 to 280 constitute a tr-type G domain; it reads AKRRTFAIIS…GLVAWAPAPM (270 aa). Residues 20–27, 88–92, and 142–145 each bind GTP; these read SHPDAGKT, DTPGH, and NKLD.

Belongs to the TRAFAC class translation factor GTPase superfamily. Classic translation factor GTPase family. PrfC subfamily.

It localises to the cytoplasm. Functionally, increases the formation of ribosomal termination complexes and stimulates activities of RF-1 and RF-2. It binds guanine nucleotides and has strong preference for UGA stop codons. It may interact directly with the ribosome. The stimulation of RF-1 and RF-2 is significantly reduced by GTP and GDP, but not by GMP. The sequence is that of Peptide chain release factor 3 from Salmonella agona (strain SL483).